The following is a 186-amino-acid chain: MASTLSTITLRSPSPSTATSTHASIPFPKKTLEFPIRTPKLQNRRATFLRPLAAVEAPEKVVQLGDEISNLTLADAQKLVEYLQDKLGVTAASFAPAAVVAAPGAAAEAPAVVEEKTEFDVVIDEVPSNARIATIKAVRALTSLALKEAKELIEGLPKKFKEGVSKDEAEDAKKQLEEAGAKVSIA.

Residues 1–11 (MASTLSTITLR) show a composition bias toward polar residues. The tract at residues 1–24 (MASTLSTITLRSPSPSTATSTHAS) is disordered. The transit peptide at 1–53 (MASTLSTITLRSPSPSTATSTHASIPFPKKTLEFPIRTPKLQNRRATFLRPLA) directs the protein to the chloroplast. The segment covering 12–24 (SPSPSTATSTHAS) has biased composition (low complexity).

The protein belongs to the bacterial ribosomal protein bL12 family.

It is found in the plastid. The protein localises to the chloroplast. This chain is Large ribosomal subunit protein bL12c, found in Nicotiana sylvestris (Wood tobacco).